The sequence spans 156 residues: Ribosome-binding factor A (156 aa).

Positions 125-138 are enriched in basic and acidic residues; sequence RVREGAKHAGDPDP. Residues 125–156 are disordered; the sequence is RVREGAKHAGDPDPYRVGGAEDTDGDTDGDER. A compositionally biased stretch (acidic residues) spans 145-156; it reads EDTDGDTDGDER.

The protein belongs to the RbfA family. In terms of assembly, monomer. Binds 30S ribosomal subunits, but not 50S ribosomal subunits or 70S ribosomes.

The protein localises to the cytoplasm. One of several proteins that assist in the late maturation steps of the functional core of the 30S ribosomal subunit. Associates with free 30S ribosomal subunits (but not with 30S subunits that are part of 70S ribosomes or polysomes). Required for efficient processing of 16S rRNA. May interact with the 5'-terminal helix region of 16S rRNA. In Mycolicibacterium smegmatis (strain ATCC 700084 / mc(2)155) (Mycobacterium smegmatis), this protein is Ribosome-binding factor A.